Reading from the N-terminus, the 236-residue chain is Leucyl/phenylalanyl-tRNA--protein transferase (236 aa).

Belongs to the L/F-transferase family.

It is found in the cytoplasm. It carries out the reaction N-terminal L-lysyl-[protein] + L-leucyl-tRNA(Leu) = N-terminal L-leucyl-L-lysyl-[protein] + tRNA(Leu) + H(+). The catalysed reaction is N-terminal L-arginyl-[protein] + L-leucyl-tRNA(Leu) = N-terminal L-leucyl-L-arginyl-[protein] + tRNA(Leu) + H(+). The enzyme catalyses L-phenylalanyl-tRNA(Phe) + an N-terminal L-alpha-aminoacyl-[protein] = an N-terminal L-phenylalanyl-L-alpha-aminoacyl-[protein] + tRNA(Phe). In terms of biological role, functions in the N-end rule pathway of protein degradation where it conjugates Leu, Phe and, less efficiently, Met from aminoacyl-tRNAs to the N-termini of proteins containing an N-terminal arginine or lysine. The polypeptide is Leucyl/phenylalanyl-tRNA--protein transferase (Vibrio campbellii (strain ATCC BAA-1116)).